The chain runs to 200 residues: Small ribosomal subunit protein uS4 (200 aa).

Residues Thr22–Lys43 form a disordered region. Residues Gln92–Glu170 form the S4 RNA-binding domain.

This sequence belongs to the universal ribosomal protein uS4 family. As to quaternary structure, part of the 30S ribosomal subunit. Contacts protein S5. The interaction surface between S4 and S5 is involved in control of translational fidelity.

Functionally, one of the primary rRNA binding proteins, it binds directly to 16S rRNA where it nucleates assembly of the body of the 30S subunit. With S5 and S12 plays an important role in translational accuracy. The protein is Small ribosomal subunit protein uS4 of Listeria monocytogenes serovar 1/2a (strain ATCC BAA-679 / EGD-e).